Here is a 230-residue protein sequence, read N- to C-terminus: 3-isopropylmalate dehydratase small subunit (230 aa).

The protein belongs to the LeuD family. LeuD type 1 subfamily. Heterodimer of LeuC and LeuD.

The catalysed reaction is (2R,3S)-3-isopropylmalate = (2S)-2-isopropylmalate. The protein operates within amino-acid biosynthesis; L-leucine biosynthesis; L-leucine from 3-methyl-2-oxobutanoate: step 2/4. Catalyzes the isomerization between 2-isopropylmalate and 3-isopropylmalate, via the formation of 2-isopropylmaleate. The sequence is that of 3-isopropylmalate dehydratase small subunit from Bifidobacterium longum (strain DJO10A).